We begin with the raw amino-acid sequence, 182 residues long: NADH-quinone oxidoreductase subunit B 2 (182 aa).

The [4Fe-4S] cluster site is built by Cys-55, Cys-56, Cys-120, and Cys-150.

This sequence belongs to the complex I 20 kDa subunit family. NDH-1 is composed of 14 different subunits. Subunits NuoB, C, D, E, F, and G constitute the peripheral sector of the complex. It depends on [4Fe-4S] cluster as a cofactor.

It localises to the cell inner membrane. The catalysed reaction is a quinone + NADH + 5 H(+)(in) = a quinol + NAD(+) + 4 H(+)(out). Functionally, NDH-1 shuttles electrons from NADH, via FMN and iron-sulfur (Fe-S) centers, to quinones in the respiratory chain. The immediate electron acceptor for the enzyme in this species is believed to be ubiquinone. Couples the redox reaction to proton translocation (for every two electrons transferred, four hydrogen ions are translocated across the cytoplasmic membrane), and thus conserves the redox energy in a proton gradient. The polypeptide is NADH-quinone oxidoreductase subunit B 2 (Sorangium cellulosum (strain So ce56) (Polyangium cellulosum (strain So ce56))).